Reading from the N-terminus, the 381-residue chain is Neuropeptide Y receptor type 2 (381 aa).

Residues 1-35 (MGPIGAEADENQTVEEMKVEQYGPQTTPRGELVPD) are disordered. The Extracellular portion of the chain corresponds to 1–51 (MGPIGAEADENQTVEEMKVEQYGPQTTPRGELVPDPEPELIDSTKLIEVQV). An N-linked (GlcNAc...) asparagine glycan is attached at Asn-11. The helical transmembrane segment at 52–72 (VLILAYCSIILLGVIGNSLVI) threads the bilayer. The Cytoplasmic segment spans residues 73–86 (HVVIKFKSMRTVTN). A helical transmembrane segment spans residues 87-107 (FFIANLAVADLLVNTLCLPFT). Residues 108–124 (LTYTLMGEWKMGPVLCH) lie on the Extracellular side of the membrane. Cys-123 and Cys-203 are oxidised to a cystine. The chain crosses the membrane as a helical span at residues 125–145 (LVPYAQGLAVQVSTITLTVIA). At 146 to 165 (LDRHRCIVYHLESKISKRIS) the chain is on the cytoplasmic side. A helical transmembrane segment spans residues 166–186 (FLIIGLAWGISALLASPLAIF). The Extracellular segment spans residues 187–216 (REYSLIEIIPDFEIVACTEKWPGEEKSIYG). A helical membrane pass occupies residues 217-237 (TVYSLSSLLILYVLPLGIISF). The Cytoplasmic segment spans residues 238–268 (SYTRIWSKLKNHVSPGAANDHYHQRRQKTTK). The helical transmembrane segment at 269-289 (MLVCVVVVFAVSWLPLHAFQL) threads the bilayer. At 290–304 (AVDIDSQVLDLKEYK) the chain is on the extracellular side. The helical transmembrane segment at 305 to 325 (LIFTVFHIIAMCSTFANPLLY) threads the bilayer. The Cytoplasmic portion of the chain corresponds to 326–381 (GWMNSNYRKAFLSAFRCEQRLDAIHSEVSVTFKAKKNLEVRKNSGPNDSFTEATNV). Residue Cys-342 is the site of S-palmitoyl cysteine attachment.

This sequence belongs to the G-protein coupled receptor 1 family. In terms of tissue distribution, high levels in amygdala, corpus callosum, hippocampus and subthalamic nucleus. Also detectable in caudate nucleus, hypothalamus and substantia nigra.

The protein localises to the cell membrane. Receptor for neuropeptide Y and peptide YY. The rank order of affinity of this receptor for pancreatic polypeptides is PYY &gt; NPY &gt; PYY (3-36) &gt; NPY (2-36) &gt; [Ile-31, Gln-34] PP &gt; [Leu-31, Pro-34] NPY &gt; PP, [Pro-34] PYY and NPY free acid. The polypeptide is Neuropeptide Y receptor type 2 (NPY2R) (Homo sapiens (Human)).